Consider the following 662-residue polypeptide: DNA ligase (662 aa).

Residues 31–35 (DYEYD), 80–81 (SL), and glutamate 109 contribute to the NAD(+) site. Residue lysine 111 is the N6-AMP-lysine intermediate of the active site. Positions 132, 166, 282, and 306 each coordinate NAD(+). Residues cysteine 400, cysteine 403, cysteine 418, and cysteine 423 each coordinate Zn(2+). The region spanning 581–662 (KVSNIFEGKT…FEEMLKGENI (82 aa)) is the BRCT domain.

This sequence belongs to the NAD-dependent DNA ligase family. LigA subfamily. Mg(2+) serves as cofactor. It depends on Mn(2+) as a cofactor.

It catalyses the reaction NAD(+) + (deoxyribonucleotide)n-3'-hydroxyl + 5'-phospho-(deoxyribonucleotide)m = (deoxyribonucleotide)n+m + AMP + beta-nicotinamide D-nucleotide.. Its function is as follows. DNA ligase that catalyzes the formation of phosphodiester linkages between 5'-phosphoryl and 3'-hydroxyl groups in double-stranded DNA using NAD as a coenzyme and as the energy source for the reaction. It is essential for DNA replication and repair of damaged DNA. The polypeptide is DNA ligase (Thermoanaerobacter sp. (strain X514)).